Consider the following 192-residue polypeptide: Peptide deformylase 1 (192 aa).

Fe cation-binding residues include Cys101 and His143. Residue Glu144 is part of the active site. His147 is a binding site for Fe cation.

Belongs to the polypeptide deformylase family. It depends on Fe(2+) as a cofactor.

The catalysed reaction is N-terminal N-formyl-L-methionyl-[peptide] + H2O = N-terminal L-methionyl-[peptide] + formate. Functionally, removes the formyl group from the N-terminal Met of newly synthesized proteins. Requires at least a dipeptide for an efficient rate of reaction. N-terminal L-methionine is a prerequisite for activity but the enzyme has broad specificity at other positions. In Prochlorococcus marinus (strain MIT 9313), this protein is Peptide deformylase 1.